A 758-amino-acid polypeptide reads, in one-letter code: Dachshund homolog 1 (758 aa).

Disordered regions lie at residues 1 to 105 (MAVP…SNCN) and 134 to 185 (INAS…TPQN). Residues 20–53 (ISTSASSSGTTTSTSSATSSPAPSIGPPASSGPT) are compositionally biased toward low complexity. Positions 73-102 (TGGGGGGGGSGGGGGSSGNGGGGGGGGGGS) are enriched in gly residues. Positions 140–163 (SSSSSSSSSSSSSSSSSSSSSSSS) are enriched in low complexity. Residues 174-185 (STPSPVENTPQN) are compositionally biased toward polar residues. Positions 189 to 275 (KMVDLRGAKV…LISRKDFETL (87 aa)) are DACHbox-N. Residues 189 to 384 (KMVDLRGAKV…VGSSDGSWDK (196 aa)) form an interaction with SIX6 and HDAC3 region. Disordered regions lie at residues 280-302 (TNASSRPGRPPKRTQSVTSPENS), 358-414 (SNNQ…PLSH), 474-532 (SPPS…RIPV), and 544-564 (MGLSPNVLPGPKEGDLAGHDM). 3 stretches are compositionally biased toward polar residues: residues 292 to 301 (RTQSVTSPEN), 358 to 380 (SNNQHGADSENGDMNSSVGSSDG), and 387 to 399 (LPSSPSQGPQASI). Residue Ser491 is modified to Phosphoserine. The span at 506 to 524 (SHPSSHRSSSVSSSPARTE) shows a compositional bias: low complexity. A compositionally biased stretch (basic and acidic residues) spans 555 to 564 (KEGDLAGHDM). The segment at 616–696 (SSIETLLTNI…KAKRKLQEAL (81 aa)) is DACHbox-C. The interaction with SIN3A stretch occupies residues 627 to 706 (GLLKVAIDNA…EFETKRREQA (80 aa)). Residues 630–718 (KVAIDNARAQ…TLKQAASTDS (89 aa)) adopt a coiled-coil conformation.

Belongs to the DACH/dachshund family. Interacts with SIX1, SIX6 and EYA3. Interacts with NCOR1 and HDAC3 through its N-terminus. Interacts with SIN3A through its C-terminus. Interacts with SMAD3 and SMAD4. Widely expressed. Isoform 2 is found in brain, heart, kidney, liver, leukocytes and spleen. Isoform 3 is found in liver and heart. Isoform 4 is found in spleen.

It localises to the nucleus. Its function is as follows. Transcription factor that is involved in regulation of organogenesis. Seems to be a regulator of SIX1, SIX6 and probably SIX5. Corepression of precursor cell proliferation in myoblasts by SIX1 is switched to coactivation through recruitment of EYA3 to the SIX1-DACH1 complex. Transcriptional activation also seems to involve association of CREBBP. Seems to act as a corepressor of SIX6 in regulating proliferation by directly repressing cyclin-dependent kinase inhibitors, including the p27Kip1 promoter. Inhibits TGF-beta signaling through interaction with SMAD4 and NCOR1. Binds to chromatin DNA via its DACHbox-N domain. This chain is Dachshund homolog 1 (DACH1), found in Homo sapiens (Human).